Here is a 952-residue protein sequence, read N- to C-terminus: Ubiquitin carboxyl-terminal hydrolase CYLD (952 aa).

Residues 106-589 (CEERLSLFRN…LEIMIGKKKG (484 aa)) are interaction with TRIP. CAP-Gly domains lie at 153–198 (LAER…VFVA) and 253–286 (DVLP…VQLC). Residues 311 to 350 (RRPPKLAFMSRGVGDKGSSSHNKPKVTGSTSDPGSRNRSE) form a disordered region. A compositionally biased stretch (polar residues) spans 327-346 (GSSSHNKPKVTGSTSDPGSR). Position 383 is a phosphoserine (serine 383). The interval 386–409 (EMSSDFGHSSPPPQPPSMNSLSSE) is disordered. Positions 390–465 (DFGHSSPPPQ…LPISSGNAHG (76 aa)) are interaction with TRAF2. 2 positions are modified to phosphoserine: serine 414 and serine 418. Residues 466–680 (LEVGSLAEVK…FTSEEKDPEE (215 aa)) are interaction with IKBKG/NEMO. Residues 488–531 (GQPPGLSDVLAGLELEDECAGCTDGTFRGTRYFTCALKKALFVK) form the CAP-Gly 3 domain. The USP domain occupies 588–946 (KGIQGHYNSC…DAYMCMYQSP (359 aa)). The active-site Nucleophile is the cysteine 597. The B-box stretch occupies residues 777–829 (LEDTPRQCRICGGLAMYECRECYDDPDISAGKIKQFCKTCSTQVHLHPRRLNH). Cysteine 784, cysteine 787, cysteine 795, cysteine 798, cysteine 813, cysteine 816, histidine 821, and histidine 829 together coordinate Zn(2+). The active-site Proton acceptor is the histidine 867.

Belongs to the peptidase C19 family. In terms of assembly, interacts (via CAP-Gly domain) with IKBKG/NEMO (via proline-rich C-terminal region). Interacts with TRAF2 and TRIP. Interacts with PLK1, DVL1, DVL3, MAVS, TBK1, IKKE and RIGI. Interacts (via CAP-Gly domain) with microtubules. Interacts with HDAC6 and BCL3. Interacts with MAP3K7. Identified in a complex with TRAF6 and SQSTM1. Interacts with OPTN and SQSTM1. Interacts with CEP350. Interacts with RNF31; the interaction is indirect and is mediated via SPATA2. Interacts with SPATA2 (via the PUB domain); the interaction is direct and recruits CYLD to the LUBAC complex, thereby regulating TNF-alpha-induced necroptosis. Phosphorylated on several serine residues by IKKA and/or IKKB in response to immune stimuli. Phosphorylation requires IKBKG. Phosphorylation abolishes TRAF2 deubiquitination, interferes with the activation of Jun kinases, and strongly reduces CD40-dependent gene activation by NF-kappa-B. In terms of processing, ubiquitinated. Polyubiquitinated in hepatocytes treated with palmitic acid. Ubiquitination is mediated by E3 ligase TRIM47 and leads to proteasomal degradation.

It is found in the cytoplasm. The protein localises to the perinuclear region. Its subcellular location is the cytoskeleton. The protein resides in the cell membrane. It localises to the microtubule organizing center. It is found in the centrosome. The protein localises to the spindle. Its subcellular location is the cilium basal body. It catalyses the reaction Thiol-dependent hydrolysis of ester, thioester, amide, peptide and isopeptide bonds formed by the C-terminal Gly of ubiquitin (a 76-residue protein attached to proteins as an intracellular targeting signal).. Deubiquitinase that specifically cleaves 'Lys-63'- and linear 'Met-1'-linked polyubiquitin chains and is involved in NF-kappa-B activation and TNF-alpha-induced necroptosis. Negatively regulates NF-kappa-B activation by deubiquitinating upstream signaling factors. Contributes to the regulation of cell survival, proliferation and differentiation via its effects on NF-kappa-B activation. Negative regulator of Wnt signaling. Inhibits HDAC6 and thereby promotes acetylation of alpha-tubulin and stabilization of microtubules. Plays a role in the regulation of microtubule dynamics, and thereby contributes to the regulation of cell proliferation, cell polarization, cell migration, and angiogenesis. Required for normal cell cycle progress and normal cytokinesis. Inhibits nuclear translocation of NF-kappa-B. Plays a role in the regulation of inflammation and the innate immune response, via its effects on NF-kappa-B activation. Dispensable for the maturation of intrathymic natural killer cells, but required for the continued survival of immature natural killer cells. Negatively regulates TNFRSF11A signaling and osteoclastogenesis. Involved in the regulation of ciliogenesis, allowing ciliary basal bodies to migrate and dock to the plasma membrane; this process does not depend on NF-kappa-B activation. Ability to remove linear ('Met-1'-linked) polyubiquitin chains regulates innate immunity and TNF-alpha-induced necroptosis: recruited to the LUBAC complex via interaction with SPATA2 and restricts linear polyubiquitin formation on target proteins. Regulates innate immunity by restricting linear polyubiquitin formation on RIPK2 in response to NOD2 stimulation. Involved in TNF-alpha-induced necroptosis by removing linear ('Met-1'-linked) polyubiquitin chains from RIPK1, thereby regulating the kinase activity of RIPK1. Negatively regulates intestinal inflammation by removing 'Lys-63' linked polyubiquitin chain of NLRP6, thereby reducing the interaction between NLRP6 and PYCARD/ASC and formation of the NLRP6 inflammasome. Does not catalyze deubiquitination of heterotypic 'Lys-63'-/'Lys-48'-linked branched ubiquitin chains. Removes 'Lys-63' linked polyubiquitin chain of MAP3K7, which inhibits phosphorylation and blocks downstream activation of the JNK-p38 kinase cascades. Also removes 'Lys-63'-linked polyubiquitin chains of MAP3K1 and MA3P3K3, which inhibit their interaction with MAP2K1 and MAP2K2. This chain is Ubiquitin carboxyl-terminal hydrolase CYLD (Cyld), found in Mus musculus (Mouse).